The primary structure comprises 143 residues: NADH-quinone oxidoreductase subunit A (143 aa).

Helical transmembrane passes span 8-28, 63-83, and 93-113; these read FGNV…GYLT, FYVV…LYPW, and FALI…AYAW.

The protein belongs to the complex I subunit 3 family. NDH-1 is composed of 14 different subunits. Subunits NuoA, H, J, K, L, M, N constitute the membrane sector of the complex.

The protein resides in the cell inner membrane. It catalyses the reaction a quinone + NADH + 5 H(+)(in) = a quinol + NAD(+) + 4 H(+)(out). Functionally, NDH-1 shuttles electrons from NADH, via FMN and iron-sulfur (Fe-S) centers, to quinones in the respiratory chain. The immediate electron acceptor for the enzyme in this species is believed to be a menaquinone. Couples the redox reaction to proton translocation (for every two electrons transferred, four hydrogen ions are translocated across the cytoplasmic membrane), and thus conserves the redox energy in a proton gradient. This Pelodictyon phaeoclathratiforme (strain DSM 5477 / BU-1) protein is NADH-quinone oxidoreductase subunit A.